The sequence spans 161 residues: 2-C-methyl-D-erythritol 2,4-cyclodiphosphate synthase (161 aa).

A divalent metal cation contacts are provided by D13 and H15. Residues 13–15 (DAH) and 40–41 (HS) contribute to the 4-CDP-2-C-methyl-D-erythritol 2-phosphate site. An a divalent metal cation-binding site is contributed by H48. 62 to 64 (DIG) serves as a coordination point for 4-CDP-2-C-methyl-D-erythritol 2-phosphate.

It belongs to the IspF family. Homotrimer. A divalent metal cation is required as a cofactor.

It catalyses the reaction 4-CDP-2-C-methyl-D-erythritol 2-phosphate = 2-C-methyl-D-erythritol 2,4-cyclic diphosphate + CMP. Its pathway is isoprenoid biosynthesis; isopentenyl diphosphate biosynthesis via DXP pathway; isopentenyl diphosphate from 1-deoxy-D-xylulose 5-phosphate: step 4/6. Functionally, involved in the biosynthesis of isopentenyl diphosphate (IPP) and dimethylallyl diphosphate (DMAPP), two major building blocks of isoprenoid compounds. Catalyzes the conversion of 4-diphosphocytidyl-2-C-methyl-D-erythritol 2-phosphate (CDP-ME2P) to 2-C-methyl-D-erythritol 2,4-cyclodiphosphate (ME-CPP) with a corresponding release of cytidine 5-monophosphate (CMP). The chain is 2-C-methyl-D-erythritol 2,4-cyclodiphosphate synthase from Deinococcus radiodurans (strain ATCC 13939 / DSM 20539 / JCM 16871 / CCUG 27074 / LMG 4051 / NBRC 15346 / NCIMB 9279 / VKM B-1422 / R1).